Consider the following 474-residue polypeptide: Ribulose bisphosphate carboxylase large chain (474 aa).

The substrate site is built by Asn-123 and Thr-173. Lys-175 (proton acceptor) is an active-site residue. Lys-177 provides a ligand contact to substrate. Mg(2+) contacts are provided by Lys-201, Asp-203, and Glu-204. Residue Lys-201 is modified to N6-carboxylysine. His-293 functions as the Proton acceptor in the catalytic mechanism. Substrate contacts are provided by Arg-294, His-326, and Ser-378.

It belongs to the RuBisCO large chain family. Type I subfamily. Heterohexadecamer of 8 large chains and 8 small chains; disulfide-linked. The disulfide link is formed within the large subunit homodimers. It depends on Mg(2+) as a cofactor. In terms of processing, the disulfide bond which can form in the large chain dimeric partners within the hexadecamer appears to be associated with oxidative stress and protein turnover.

The protein resides in the carboxysome. The catalysed reaction is 2 (2R)-3-phosphoglycerate + 2 H(+) = D-ribulose 1,5-bisphosphate + CO2 + H2O. It carries out the reaction D-ribulose 1,5-bisphosphate + O2 = 2-phosphoglycolate + (2R)-3-phosphoglycerate + 2 H(+). Its function is as follows. RuBisCO catalyzes two reactions: the carboxylation of D-ribulose 1,5-bisphosphate, the primary event in carbon dioxide fixation, as well as the oxidative fragmentation of the pentose substrate in the photorespiration process. Both reactions occur simultaneously and in competition at the same active site. The protein is Ribulose bisphosphate carboxylase large chain of Synechococcus sp.